A 415-amino-acid polypeptide reads, in one-letter code: MGHFFSANNRQRAITTRLQLDEEIVLFRQDQLISSFLEIAVDQTAETARILLQTTDWNIDQAVNLFLTNNAMYREVVDSTTSGTSDDSDSRSSFSFPPPSYILHEGLFEYAKYVSIEKNLWLVVNLQSRTELGSHILNRDVWANDAVSRTIESHFIVWQVYDDTNEGQKISSFYKIEAPPPVVFVINPITGQKMHMWSGVIEAESIVEDLMMFWDAGPHENIASLTRNRRTETAETCLSSYNFYETPAPSWGEEFEEEDNWSSRSNNNQVVAPTWEKELEEQDEWEIWSSRSDTDDFVPPFMGDEYEDPDEVKEEEICLVFPVLTEEPKGDCDRSVVCSLCVRFPDGRRKQRKFLKSEPIQLLWSFCYSHIDESEKKAFKLVQAIPGASKTLDCEADATFDQSGLANSLISVTWE.

Residues 19 to 69 (QLDEEIVLFRQDQLISSFLEIAVDQTAETARILLQTTDWNIDQAVNLFLTN) enclose the UBA domain. In terms of domain architecture, UBX spans 333-413 (DRSVVCSLCV…GLANSLISVT (81 aa)).

The protein is Plant UBX domain-containing protein 16 of Arabidopsis thaliana (Mouse-ear cress).